The following is a 365-amino-acid chain: Aminomethyltransferase (365 aa).

It belongs to the GcvT family. As to quaternary structure, the glycine cleavage system is composed of four proteins: P, T, L and H.

It catalyses the reaction N(6)-[(R)-S(8)-aminomethyldihydrolipoyl]-L-lysyl-[protein] + (6S)-5,6,7,8-tetrahydrofolate = N(6)-[(R)-dihydrolipoyl]-L-lysyl-[protein] + (6R)-5,10-methylene-5,6,7,8-tetrahydrofolate + NH4(+). In terms of biological role, the glycine cleavage system catalyzes the degradation of glycine. This chain is Aminomethyltransferase, found in Aeromonas hydrophila subsp. hydrophila (strain ATCC 7966 / DSM 30187 / BCRC 13018 / CCUG 14551 / JCM 1027 / KCTC 2358 / NCIMB 9240 / NCTC 8049).